A 345-amino-acid chain; its full sequence is NADPH dehydrogenase (345 aa).

Position 23–26 (23–26 (SPMC)) interacts with FMN. Tyrosine 28 provides a ligand contact to substrate. Residues alanine 60 and glutamine 102 each coordinate FMN. 164–167 (HGAH) serves as a coordination point for substrate. FMN contacts are provided by residues arginine 215 and 307-308 (GR).

The protein belongs to the NADH:flavin oxidoreductase/NADH oxidase family. NamA subfamily. As to quaternary structure, homotetramer. Requires FMN as cofactor.

The catalysed reaction is A + NADPH + H(+) = AH2 + NADP(+). Its function is as follows. Catalyzes the reduction of the double bond of an array of alpha,beta-unsaturated aldehydes and ketones. It also reduces the nitro group of nitroester and nitroaromatic compounds. It could have a role in detoxification processes. This Bacillus cereus (strain ATCC 10987 / NRS 248) protein is NADPH dehydrogenase.